Reading from the N-terminus, the 398-residue chain is Acetate kinase (398 aa).

Asn8 is a Mg(2+) binding site. ATP is bound at residue Lys15. Residue Arg89 coordinates substrate. The active-site Proton donor/acceptor is the Asp146. ATP is bound by residues 206–210, 283–285, and 331–335; these read HIGNG, DMR, and GMGEN. Glu383 lines the Mg(2+) pocket.

The protein belongs to the acetokinase family. In terms of assembly, homodimer. Requires Mg(2+) as cofactor. It depends on Mn(2+) as a cofactor.

It is found in the cytoplasm. It catalyses the reaction acetate + ATP = acetyl phosphate + ADP. It functions in the pathway metabolic intermediate biosynthesis; acetyl-CoA biosynthesis; acetyl-CoA from acetate: step 1/2. Functionally, catalyzes the formation of acetyl phosphate from acetate and ATP. Can also catalyze the reverse reaction. The sequence is that of Acetate kinase from Streptococcus pyogenes serotype M5 (strain Manfredo).